We begin with the raw amino-acid sequence, 622 residues long: Dopamine beta-hydroxylase (622 aa).

Over 1–20 (MQAHLSHQPCWSSLPSPSVR) the chain is Cytoplasmic. The helical; Signal-anchor for type II membrane protein transmembrane segment at 21-41 (EAASMYGTAVAIFLVILVAAL) threads the bilayer. Residues 42 to 621 (RGSEPPESPF…TVPITTEADA (580 aa)) are Intragranular-facing. The DOMON domain maps to 61-177 (GILELSWNVS…DTVHLVYGIL (117 aa)). N-linked (GlcNAc...) asparagine glycans are attached at residues asparagine 68 and asparagine 188. 6 disulfide bridges follow: cysteine 158/cysteine 600, cysteine 236/cysteine 287, cysteine 273/cysteine 299, cysteine 394/cysteine 507, cysteine 398/cysteine 569, and cysteine 470/cysteine 492. Residue tyrosine 234 is part of the active site. Cu(2+)-binding residues include histidine 266 and histidine 267. Position 337 (histidine 337) interacts with Cu(2+). Serine 350 is subject to Phosphoserine; by CaMK. Residue histidine 416 is part of the active site. Cu(2+) contacts are provided by histidine 416 and histidine 418. A glycan (N-linked (GlcNAc...) asparagine) is linked at asparagine 476. Methionine 491 contributes to the Cu(2+) binding site. Residue asparagine 570 is glycosylated (N-linked (GlcNAc...) asparagine). The disordered stretch occupies residues 594 to 622 (EEPTPRCPIRQTQSPANPTVPITTEADAE). Polar residues predominate over residues 603–615 (RQTQSPANPTVPI).

This sequence belongs to the copper type II ascorbate-dependent monooxygenase family. Homotetramer; composed of two disulfide-linked dimers. The cofactor is Cu(2+). Proteolytic cleavage after the membrane-anchor leads to the release of the soluble form. Post-translationally, N-glycosylated. Detected in adrenal gland secretory granules (at protein level). Detected in adrenal gland.

It is found in the cytoplasmic vesicle. Its subcellular location is the secretory vesicle lumen. It localises to the secretory vesicle. The protein resides in the chromaffin granule lumen. The protein localises to the secretory vesicle membrane. It is found in the chromaffin granule membrane. The enzyme catalyses dopamine + 2 L-ascorbate + O2 = (R)-noradrenaline + 2 monodehydro-L-ascorbate radical + H2O. Its pathway is catecholamine biosynthesis; (R)-noradrenaline biosynthesis; (R)-noradrenaline from dopamine: step 1/1. In terms of biological role, catalyzes the hydroxylation of dopamine to noradrenaline (also known as norepinephrine), and is thus vital for regulation of these neurotransmitters. The sequence is that of Dopamine beta-hydroxylase (Dbh) from Mus musculus (Mouse).